We begin with the raw amino-acid sequence, 995 residues long: Protein translocase subunit SecA (995 aa).

ATP is bound by residues Gln-86, 104-108, and Asp-535; that span reads GEGKT. Positions 883-911 are disordered; that stretch reads AQTVSSDGNGEVVRKPQRRSTPQIGRNEL. The Zn(2+) site is built by Cys-912, Cys-914, Cys-923, and His-924. A disordered region spans residues 939–995; sequence PSAPPASKALKSTPATQTAVAEEAAKIQAAINSGKLPPTQTTPRGRQAPSVPRGKKR. Over residues 957–969 the composition is skewed to low complexity; it reads AVAEEAAKIQAAI.

This sequence belongs to the SecA family. In terms of assembly, monomer and homodimer. Part of the essential Sec protein translocation apparatus which comprises SecA, SecYEG and auxiliary proteins SecDF. Other proteins may also be involved. Zn(2+) serves as cofactor.

It is found in the cell membrane. It localises to the cytoplasm. The enzyme catalyses ATP + H2O + cellular proteinSide 1 = ADP + phosphate + cellular proteinSide 2.. Its function is as follows. Part of the Sec protein translocase complex. Interacts with the SecYEG preprotein conducting channel. Has a central role in coupling the hydrolysis of ATP to the transfer of proteins into and across the cell membrane, serving as an ATP-driven molecular motor driving the stepwise translocation of polypeptide chains across the membrane. The sequence is that of Protein translocase subunit SecA from Chloroflexus aurantiacus (strain ATCC 29366 / DSM 635 / J-10-fl).